The sequence spans 562 residues: 3-hydroxy-3-methylglutaryl-coenzyme A reductase 2 (562 aa).

Transmembrane regions (helical) follow at residues 32–56 and 77–100; these read ALPL…YFLL and ICAL…DLIF. Residues 101 to 146 form a linker region; it reads RSSSDDDVWVNDGMIPCNQSLDCREVLPIKPNSVDPPRESELDSVE. Residue Asn-118 is glycosylated (N-linked (GlcNAc...) asparagine). Positions 147–562 are catalytic; the sequence is DEEIVKLVID…DIGPSSQVNR (416 aa). The Charge relay system role is filled by Glu-240. The N-linked (GlcNAc...) asparagine glycan is linked to Asn-304. Residues Lys-372 and Asp-448 each act as charge relay system in the active site. His-544 serves as the catalytic Proton donor. N-linked (GlcNAc...) asparagine glycosylation is present at Asn-548. Ser-550 bears the Phosphoserine mark.

Belongs to the HMG-CoA reductase family. As to expression, restricted to young seedlings, roots, and inflorescences. Expressed in root tips, shoot apex, secretory zone of the stigma, microspores, mature pollen grains, gynoecium vascular tissue and fertilized ovules.

The protein localises to the endoplasmic reticulum membrane. The enzyme catalyses (R)-mevalonate + 2 NADP(+) + CoA = (3S)-3-hydroxy-3-methylglutaryl-CoA + 2 NADPH + 2 H(+). It functions in the pathway metabolic intermediate biosynthesis; (R)-mevalonate biosynthesis; (R)-mevalonate from acetyl-CoA: step 3/3. Its activity is regulated as follows. Regulated at the post-translational level in response to alterations of the sphingolipid and the sterol biosynthetic pathways. In terms of biological role, catalyzes the synthesis of mevalonate. The specific precursor of all isoprenoid compounds present in plants. The chain is 3-hydroxy-3-methylglutaryl-coenzyme A reductase 2 (HMG2) from Arabidopsis thaliana (Mouse-ear cress).